Consider the following 490-residue polypeptide: Cobyric acid synthase (490 aa).

Residues 252–439 form the GATase cobBQ-type domain; the sequence is RLKVVVPVLP…LHGLFESTAA (188 aa). C333 acts as the Nucleophile in catalysis. Residue H431 is part of the active site.

Belongs to the CobB/CobQ family. CobQ subfamily.

It functions in the pathway cofactor biosynthesis; adenosylcobalamin biosynthesis. Functionally, catalyzes amidations at positions B, D, E, and G on adenosylcobyrinic A,C-diamide. NH(2) groups are provided by glutamine, and one molecule of ATP is hydrogenolyzed for each amidation. This Pseudomonas aeruginosa (strain ATCC 15692 / DSM 22644 / CIP 104116 / JCM 14847 / LMG 12228 / 1C / PRS 101 / PAO1) protein is Cobyric acid synthase.